We begin with the raw amino-acid sequence, 1483 residues long: Guanylyl cyclase, membrane (1483 aa).

The next 6 membrane-spanning stretches (helical) occupy residues 50–70 (ISII…YISP), 143–163 (FILR…TFTA), 168–188 (LWKL…LIFE), 198–218 (MVLL…PSML), 219–239 (ASGG…QIAG), and 242–262 (MVLL…ISRF). The disordered stretch occupies residues 323–376 (KKDEESNLTGKKQSKVVVSPPPPPTAAAPQQQDNEISTPQNSRKIVDPQSPSSL). Positions 355–376 (DNEISTPQNSRKIVDPQSPSSL) are enriched in polar residues. Positions 395–517 (TVLFCEIVNF…DTINTSSRMA (123 aa)) constitute a Guanylate cyclase 1 domain. 2 disordered regions span residues 598–619 (NNTI…THPN) and 672–838 (LTSP…GDDF). The span at 610–619 (GSATGPTHPN) shows a compositional bias: polar residues. Low complexity-rich tracts occupy residues 672–684 (LTSP…PQQS), 693–712 (SPRL…SSST), and 720–765 (NNNN…NNNN). Polar residues predominate over residues 772 to 786 (SPISQNTTPTGSLSL). 6 helical membrane passes run 907 to 927 (ILAS…VDYF), 982 to 1002 (IITG…YVVS), 1016 to 1036 (VVMV…SVPP), 1040 to 1060 (IPLD…CYNF), 1061 to 1081 (SGIK…FIEI), and 1094 to 1114 (IYLS…ITSY). In terms of domain architecture, Guanylate cyclase 2 spans 1168–1296 (TIFLSDIVGF…ESVQITQQME (129 aa)). Mg(2+) is bound by residues Asp1173, Ile1174, and Asp1217. Disordered stretches follow at residues 1348 to 1369 (QPEV…SLQY) and 1393 to 1483 (NQND…SESS). Over residues 1354-1369 (RSVSVSKSNFGGSLQY) the composition is skewed to polar residues. Low complexity predominate over residues 1405–1416 (NENGNESSSSNI). The segment covering 1432 to 1444 (NEDDESSYEDDQE) has biased composition (acidic residues). The span at 1446-1465 (NQYLNNSENNKNNNNNSNQI) shows a compositional bias: low complexity.

Belongs to the adenylyl cyclase class-4/guanylyl cyclase family. In terms of assembly, homodimer. It depends on Mg(2+) as a cofactor.

Its subcellular location is the membrane. It catalyses the reaction GTP = 3',5'-cyclic GMP + diphosphate. With respect to regulation, activated by guanosine 5'-3-O-(thio)triphosphate (GTPgammaS). Inhibited by calcium. Its function is as follows. Synthesizes cyclic GMP (cGMP) from GTP, after activation by heterotrimeric or monomeric G proteins. Involved in chemotaxis. The protein is Guanylyl cyclase, membrane (gca) of Dictyostelium discoideum (Social amoeba).